The sequence spans 62 residues: Sperm protamine P1 (62 aa).

Residues 1 to 62 are disordered; the sequence is MARYRHSRSR…RYSRRRRRRY (62 aa).

This sequence belongs to the protamine P1 family. Testis.

The protein resides in the nucleus. It is found in the chromosome. Functionally, protamines substitute for histones in the chromatin of sperm during the haploid phase of spermatogenesis. They compact sperm DNA into a highly condensed, stable and inactive complex. This chain is Sperm protamine P1 (PRM1), found in Dendrolagus dorianus (Doria's tree-kangaroo).